A 588-amino-acid polypeptide reads, in one-letter code: Glutamate--tRNA ligase (588 aa).

Positions 112-122 match the 'HIGH' region motif; the sequence is PNPDFYLHLGS.

Belongs to the class-I aminoacyl-tRNA synthetase family. Glutamate--tRNA ligase type 2 subfamily.

It localises to the cytoplasm. The enzyme catalyses tRNA(Glu) + L-glutamate + ATP = L-glutamyl-tRNA(Glu) + AMP + diphosphate. Catalyzes the attachment of glutamate to tRNA(Glu) in a two-step reaction: glutamate is first activated by ATP to form Glu-AMP and then transferred to the acceptor end of tRNA(Glu). The sequence is that of Glutamate--tRNA ligase from Caldivirga maquilingensis (strain ATCC 700844 / DSM 13496 / JCM 10307 / IC-167).